The sequence spans 143 residues: MKSYMARPGEVERKWYVIDAEGKTLGRLAAEISRLLRGKNKPQYTPHVDVGDFVVVVNADKVEVTGRKAEQKVYRWHTGYPGGLRERSYRQMLRKRPEEILRQAVRGMMPKTRLARRQLKKLRIYAGPEHPHAGQTPEPYEVR.

It belongs to the universal ribosomal protein uL13 family. In terms of assembly, part of the 50S ribosomal subunit.

Functionally, this protein is one of the early assembly proteins of the 50S ribosomal subunit, although it is not seen to bind rRNA by itself. It is important during the early stages of 50S assembly. This Rubrobacter xylanophilus (strain DSM 9941 / JCM 11954 / NBRC 16129 / PRD-1) protein is Large ribosomal subunit protein uL13.